The following is a 197-amino-acid chain: Probable GTP-binding protein EngB (197 aa).

Positions 22 to 195 constitute an EngB-type G domain; the sequence is ALPELALVGR…WQWIEERTGV (174 aa). Residues 30–37, 57–61, 75–78, 142–145, and 174–176 each bind GTP; these read GRSNVGKS, GKTQT, DVPG, TKVD, and FSA. The Mg(2+) site is built by Ser37 and Thr59.

It belongs to the TRAFAC class TrmE-Era-EngA-EngB-Septin-like GTPase superfamily. EngB GTPase family. The cofactor is Mg(2+).

Functionally, necessary for normal cell division and for the maintenance of normal septation. The chain is Probable GTP-binding protein EngB from Limosilactobacillus fermentum (strain NBRC 3956 / LMG 18251) (Lactobacillus fermentum).